The chain runs to 159 residues: Ribosomal RNA large subunit methyltransferase H (159 aa).

Residues glycine 108 and 127–132 (FSKMTF) each bind S-adenosyl-L-methionine.

The protein belongs to the RNA methyltransferase RlmH family. In terms of assembly, homodimer.

It is found in the cytoplasm. It carries out the reaction pseudouridine(1915) in 23S rRNA + S-adenosyl-L-methionine = N(3)-methylpseudouridine(1915) in 23S rRNA + S-adenosyl-L-homocysteine + H(+). Specifically methylates the pseudouridine at position 1915 (m3Psi1915) in 23S rRNA. This is Ribosomal RNA large subunit methyltransferase H from Clostridium beijerinckii (strain ATCC 51743 / NCIMB 8052) (Clostridium acetobutylicum).